The following is a 152-amino-acid chain: Allergen Asp f 15 (152 aa).

Residues 1-19 (MKFTTPISLISLFVSSALA) form the signal peptide. Cystine bridges form between Cys-53/Cys-90 and Cys-93/Cys-148.

It belongs to the cerato-platanin family.

Its subcellular location is the secreted. This Aspergillus fumigatus (strain ATCC MYA-4609 / CBS 101355 / FGSC A1100 / Af293) (Neosartorya fumigata) protein is Allergen Asp f 15.